Here is a 685-residue protein sequence, read N- to C-terminus: Beta-taxilin (685 aa).

Residues 1–135 are disordered; sequence MEINHPDQLS…KEPVSNKEQK (135 aa). Residues 18 to 28 show a composition bias toward polar residues; sequence GDSSSLNQNGP. Composition is skewed to basic and acidic residues over residues 47-67 and 80-90; these read GSLHPEKGAHDVAEELSRQLE and RGKESTSETKE. Positions 98 to 113 are enriched in acidic residues; that stretch reads PDNEDVDYEETTEEID. Coiled coils occupy residues 138 to 354 and 381 to 470; these read KKIL…VLKE and NEVF…SEKE. The segment covering 465–478 has biased composition (basic and acidic residues); sequence KMSEKEDQVQRTSE. Disordered regions lie at residues 465–497 and 517–685; these read KMSEKEDQVQRTSEEEPEPSVSENEEVDAEEAN and EFTP…NGVD. 3 positions are modified to phosphoserine: serine 477, serine 484, and serine 486. A compositionally biased stretch (acidic residues) spans 479–495; it reads EEPEPSVSENEEVDAEE. Residues 575-591 show a composition bias toward low complexity; that stretch reads CEATPAPTASCTPAEAE. Over residues 612–627 the composition is skewed to polar residues; that stretch reads ANTSGQAPLSPAQGSL.

Belongs to the taxilin family. Binds to the C-terminal coiled coil region of syntaxin family members STX1A, STX3A and STX4A. Has a preference for STX1A. Specifically expressed in skeletal muscle.

In terms of biological role, promotes motor nerve regeneration. May be involved in intracellular vesicle traffic. This chain is Beta-taxilin (Txlnb), found in Mus musculus (Mouse).